A 364-amino-acid polypeptide reads, in one-letter code: C3a anaphylatoxin chemotactic receptor (364 aa).

Residues 1–50 (MGDNMDFSEHYGNFSENYVTESYGEFDLYYDPLNETSLSEQGHRSIWVLS) lie on the Extracellular side of the membrane. 2 N-linked (GlcNAc...) asparagine glycosylation sites follow: Asn13 and Asn34. Residues 51–71 (IVLCSIACVLGITGNAFVIWI) traverse the membrane as a helical segment. The Cytoplasmic portion of the chain corresponds to 72-82 (AGVKMKRTVNT). A helical transmembrane segment spans residues 83–103 (IWFVNLAAADLLCCVSIPFSI). The Extracellular portion of the chain corresponds to 104-120 (ADIILNSHWPYGEAMCK). Cys119 and Cys198 are disulfide-bonded. The chain crosses the membrane as a helical span at residues 121-141 (ILPSMVVLNMFASVFTLVLIS). The Cytoplasmic portion of the chain corresponds to 142 to 159 (LDRFALVILPVWAQNHRS). The helical transmembrane segment at 160-180 (ITLAWLLCGLVWVLGLLLSLP) threads the bilayer. At 181–220 (SMIYREIVVHDDMNITLCIYNHLQDKTEGNQSAIKAIHVT) the chain is on the extracellular side. Residues 221–241 (RLILGFLIPLLVIAVCYLLIG) traverse the membrane as a helical segment. At 242-256 (RRVSSGRFKSQRAFQ) the chain is on the cytoplasmic side. Residues 257–277 (IILVVVTTFFVCWLPYHVIGL) form a helical membrane-spanning segment. The Extracellular segment spans residues 278-295 (VIEYGKEASQVMARALDP). Residues 296–316 (LAISLAYVNSCLNPVLYVFMG) form a helical membrane-spanning segment. Topologically, residues 317–364 (QDFKERVRVSLRKIFEKVFSEDVTLRSSVYSKGQSQLSRATNSSEAQV) are cytoplasmic.

The protein belongs to the G-protein coupled receptor 1 family.

It is found in the cell membrane. Its function is as follows. Receptor for the chemotactic and inflammatory peptide anaphylatoxin C3a. This receptor stimulates chemotaxis, granule enzyme release and superoxide anion production. The polypeptide is C3a anaphylatoxin chemotactic receptor (c3ar1) (Oncorhynchus mykiss (Rainbow trout)).